The sequence spans 242 residues: Methylthioribulose-1-phosphate dehydratase (242 aa).

Residue Cys-97 coordinates substrate. His-115 and His-117 together coordinate Zn(2+). Glu-139 serves as the catalytic Proton donor/acceptor. Position 195 (His-195) interacts with Zn(2+).

This sequence belongs to the aldolase class II family. MtnB subfamily. As to quaternary structure, homotetramer. Interacts with APAF1. May interact with CASP1. Requires Zn(2+) as cofactor.

Its subcellular location is the cytoplasm. The catalysed reaction is 5-(methylsulfanyl)-D-ribulose 1-phosphate = 5-methylsulfanyl-2,3-dioxopentyl phosphate + H2O. Its pathway is amino-acid biosynthesis; L-methionine biosynthesis via salvage pathway; L-methionine from S-methyl-5-thio-alpha-D-ribose 1-phosphate: step 2/6. Functionally, catalyzes the dehydration of methylthioribulose-1-phosphate (MTRu-1-P) into 2,3-diketo-5-methylthiopentyl-1-phosphate (DK-MTP-1-P). Functions in the methionine salvage pathway, which plays a key role in cancer, apoptosis, microbial proliferation and inflammation. May inhibit the CASP1-related inflammatory response (pyroptosis), the CASP9-dependent apoptotic pathway and the cytochrome c-dependent and APAF1-mediated cell death. This chain is Methylthioribulose-1-phosphate dehydratase, found in Bos taurus (Bovine).